The chain runs to 377 residues: Nitric oxide reductase FlRd-NAD(+) reductase (377 aa).

This sequence belongs to the FAD-dependent oxidoreductase family. FAD is required as a cofactor.

It localises to the cytoplasm. It carries out the reaction 2 reduced [nitric oxide reductase rubredoxin domain] + NAD(+) + H(+) = 2 oxidized [nitric oxide reductase rubredoxin domain] + NADH. Its pathway is nitrogen metabolism; nitric oxide reduction. One of at least two accessory proteins for anaerobic nitric oxide (NO) reductase. Reduces the rubredoxin moiety of NO reductase. This chain is Nitric oxide reductase FlRd-NAD(+) reductase, found in Salmonella agona (strain SL483).